We begin with the raw amino-acid sequence, 156 residues long: ATP synthase subunit b (156 aa).

The chain crosses the membrane as a helical span at residues 3–23 (ITFTIFAQSIAFAALIWIVAT).

This sequence belongs to the ATPase B chain family. As to quaternary structure, F-type ATPases have 2 components, F(1) - the catalytic core - and F(0) - the membrane proton channel. F(1) has five subunits: alpha(3), beta(3), gamma(1), delta(1), epsilon(1). F(0) has three main subunits: a(1), b(2) and c(10-14). The alpha and beta chains form an alternating ring which encloses part of the gamma chain. F(1) is attached to F(0) by a central stalk formed by the gamma and epsilon chains, while a peripheral stalk is formed by the delta and b chains.

Its subcellular location is the cell inner membrane. Its function is as follows. F(1)F(0) ATP synthase produces ATP from ADP in the presence of a proton or sodium gradient. F-type ATPases consist of two structural domains, F(1) containing the extramembraneous catalytic core and F(0) containing the membrane proton channel, linked together by a central stalk and a peripheral stalk. During catalysis, ATP synthesis in the catalytic domain of F(1) is coupled via a rotary mechanism of the central stalk subunits to proton translocation. Component of the F(0) channel, it forms part of the peripheral stalk, linking F(1) to F(0). The protein is ATP synthase subunit b of Xylella fastidiosa (strain M12).